The following is a 499-amino-acid chain: Glycerol kinase (499 aa).

T13 lines the ADP pocket. Residues T13, T14, and S15 each contribute to the ATP site. Residue T13 participates in sn-glycerol 3-phosphate binding. An ADP-binding site is contributed by R17. Sn-glycerol 3-phosphate-binding residues include R83, E84, Y135, and D245. Glycerol-binding residues include R83, E84, Y135, D245, and Q246. Positions 267 and 310 each coordinate ADP. Residues T267, G310, Q314, and G411 each coordinate ATP. ADP contacts are provided by G411 and N415.

It belongs to the FGGY kinase family.

It catalyses the reaction glycerol + ATP = sn-glycerol 3-phosphate + ADP + H(+). The protein operates within polyol metabolism; glycerol degradation via glycerol kinase pathway; sn-glycerol 3-phosphate from glycerol: step 1/1. With respect to regulation, inhibited by fructose 1,6-bisphosphate (FBP). Key enzyme in the regulation of glycerol uptake and metabolism. Catalyzes the phosphorylation of glycerol to yield sn-glycerol 3-phosphate. This Xanthomonas campestris pv. campestris (strain ATCC 33913 / DSM 3586 / NCPPB 528 / LMG 568 / P 25) protein is Glycerol kinase.